The following is a 224-amino-acid chain: Ribonuclease HII (224 aa).

The RNase H type-2 domain maps to 1-219; the sequence is MMIAGIDEAG…VENIREELKK (219 aa). Positions 7, 8, and 105 each coordinate a divalent metal cation.

This sequence belongs to the RNase HII family. The cofactor is Mn(2+). Mg(2+) is required as a cofactor.

The protein resides in the cytoplasm. It carries out the reaction Endonucleolytic cleavage to 5'-phosphomonoester.. In terms of biological role, endonuclease that specifically degrades the RNA of RNA-DNA hybrids. This is Ribonuclease HII from Methanosarcina barkeri (strain Fusaro / DSM 804).